A 172-amino-acid chain; its full sequence is Small ribosomal subunit protein uS5 (172 aa).

The region spanning Met17–Val80 is the S5 DRBM domain.

The protein belongs to the universal ribosomal protein uS5 family. In terms of assembly, part of the 30S ribosomal subunit. Contacts proteins S4 and S8.

Functionally, with S4 and S12 plays an important role in translational accuracy. In terms of biological role, located at the back of the 30S subunit body where it stabilizes the conformation of the head with respect to the body. The chain is Small ribosomal subunit protein uS5 from Herminiimonas arsenicoxydans.